The chain runs to 119 residues: Protein sigma-1-small (119 aa).

It belongs to the orthoreovirus sigma-1s protein family.

The chain is Protein sigma-1-small (S1) from Mammalia (T1L).